We begin with the raw amino-acid sequence, 622 residues long: FERM domain-containing protein 6 (622 aa).

Residues 16 to 328 (RRVCIFLPND…NSHRLYMNLQ (313 aa)) form the FERM domain. Residues 357 to 452 (LDMDPLEKRS…KDRLEEDSQD (96 aa)) are disordered. Composition is skewed to low complexity over residues 384-395 (HSTASHSSSHTS) and 425-438 (SSMT…TSGV). The residue at position 522 (Ser-522) is a Phosphoserine. Phosphothreonine is present on Thr-523. 3 positions are modified to phosphoserine: Ser-525, Ser-542, and Ser-544.

Its subcellular location is the cytoplasm. It localises to the cell membrane. This Mus musculus (Mouse) protein is FERM domain-containing protein 6 (Frmd6).